Consider the following 316-residue polypeptide: Glutathione synthetase (316 aa).

An ATP-grasp domain is found at 125-310 (KLFTAWFSDL…ITGMLMDAIE (186 aa)). An ATP-binding site is contributed by 151–207 (WEKHSDIILKPLDGMGGASIFRVKEGDPNLGVIAETLTEHGTRYCMAQNYLPAIKDG). 2 residues coordinate Mg(2+): Glu-281 and Asn-283.

Belongs to the prokaryotic GSH synthase family. Mg(2+) is required as a cofactor. The cofactor is Mn(2+).

It catalyses the reaction gamma-L-glutamyl-L-cysteine + glycine + ATP = glutathione + ADP + phosphate + H(+). It participates in sulfur metabolism; glutathione biosynthesis; glutathione from L-cysteine and L-glutamate: step 2/2. The sequence is that of Glutathione synthetase from Escherichia coli O6:H1 (strain CFT073 / ATCC 700928 / UPEC).